Here is a 539-residue protein sequence, read N- to C-terminus: MNRRNLLKASMALAAYGSVSASGLFAARALAAAADGEIEHFDFAELQAHAKKLASKGYVSNKQVLPPVLANMTPQQFNAIRYDPNHSLWKDVHGQLDVHFFHVGMGFKTPVRMYSVDPQSKQAREVHFRHDLFNYENSGIDKNLVKGDLGFAGFKLFKAPEIAINDVVSFLGASYFRAVDSNKQYGLSARGLAIDSYAKRQEEFPDFTKFWFETPDKNATRFVVYALLDSPSATGAYRFDIDCQAGQVVMEIDAHVNARTDIQQLGISPMTSMFSCGTHERRMCDTIHPQIHDSDRLSMWRGNGEWICRPLNNPAKPQFSAFSDTDPKGFGLVQSDHEFSSYQDTVVWYSRRPSLWVEPITAWGEGEVSLLELPTTGETMDNIVVFWTPKTPVKAGDSMNYGYKLFWSPLPPVSTPLAQVHATRSGMGGFLEGWAPGEHYPTTWARRFAVDFNGGGLDRLPEGTGIEPIVTVTHGKVQDFNILVLPDIKGYRVTFDWVPDSDSVEPVEMRMFIRTGDRTLSETWLYQYFPPAPDKRKYP.

The tat-type signal signal peptide spans 1 to 29 (MNRRNLLKASMALAAYGSVSASGLFAARA).

The protein belongs to the OpgD/OpgG family. Post-translationally, predicted to be exported by the Tat system. The position of the signal peptide cleavage has not been experimentally proven.

It is found in the periplasm. Its pathway is glycan metabolism; osmoregulated periplasmic glucan (OPG) biosynthesis. In terms of biological role, probably involved in the control of the structural glucose backbone of osmoregulated periplasmic glucans (OPGs). The polypeptide is Glucans biosynthesis protein D (Pseudomonas syringae pv. syringae (strain B728a)).